A 1348-amino-acid chain; its full sequence is Vascular endothelial growth factor receptor 2 (1348 aa).

The first 20 residues, 1–20, serve as a signal peptide directing secretion; sequence MELGPLRVLTVLLCLAPVFA. Topologically, residues 21–756 are extracellular; it reads GLFISMDQPT…GAEEKTNLEL (736 aa). Residues Asn-43, Asn-47, Asn-63, Asn-93, Asn-138, Asn-153, Asn-201, Asn-240, Asn-290, Asn-310, Asn-365, Asn-386, Asn-513, Asn-556, Asn-603, Asn-613, Asn-622, Asn-666, Asn-688, and Asn-710 are each glycosylated (N-linked (GlcNAc...) asparagine). Ig-like C2-type domains follow at residues 43 to 106, 138 to 202, 220 to 312, 320 to 405, 412 to 534, 540 to 651, and 658 to 744; these read NDTL…GDSQ, NKTV…IDNE, DLTM…KNSS, PFIH…HTFT, PQIG…RVIS, GLEI…KHLT, and PRLV…AFFS. A disulfide bridge links Cys-50 with Cys-100. Cysteines 145 and 195 form a disulfide. Cysteines 241 and 299 form a disulfide. The cysteines at positions 436 and 520 are disulfide-linked. A disulfide bond links Cys-561 and Cys-633. Cys-679 and Cys-728 form a disulfide bridge. Residues 757-777 form a helical membrane-spanning segment; it reads IILVGTAVIAMFFWLLLVIIL. Over 778–1348 the chain is Cytoplasmic; the sequence is RTVKRANGGD…SPAPVASLPL (571 aa). The region spanning 825–1155 is the Protein kinase domain; the sequence is LKLGKPLGRG…FSELVEHLGN (331 aa). Residues 831–839 and Lys-859 each bind ATP; that span reads LGRGAFGQV. The segment covering 958–967 has biased composition (low complexity); sequence ITSSQSSTSS. Positions 958–983 are disordered; that stretch reads ITSSQSSTSSGFVEERSLSDVEEEDA. Asp-1021 serves as the catalytic Proton acceptor. Phosphotyrosine; by autocatalysis is present on residues Tyr-1047, Tyr-1052, Tyr-1168, and Tyr-1207. Residues 1280–1302 form a disordered region; sequence PSKSNESVMSEASNQTSGYQSGY.

Belongs to the protein kinase superfamily. Tyr protein kinase family. CSF-1/PDGF receptor subfamily. Autophosphorylated on tyrosine residues upon ligand binding. Autophosphorylation occurs in trans, i.e. one subunit of the dimeric receptor phosphorylates tyrosine residues on the other subunit. In terms of tissue distribution, in all endothelial tissues during onset of vascularization. In later development, present in lung, heart, intestine and skin.

The protein resides in the cell membrane. It is found in the cytoplasmic vesicle. It localises to the early endosome. Its subcellular location is the cell junction. The protein localises to the endoplasmic reticulum. The catalysed reaction is L-tyrosyl-[protein] + ATP = O-phospho-L-tyrosyl-[protein] + ADP + H(+). Its activity is regulated as follows. Present in an inactive conformation in the absence of bound ligand. Binding of VEGFA, VEGFC or VEGFD leads to dimerization and activation by autophosphorylation on tyrosine residues. Its function is as follows. Tyrosine-protein kinase that acts as a cell-surface receptor for VEGFA, VEGFC and/or VEGFD and plays an essential role in the regulation of angiogenesis and vascular development. Promotes proliferation, survival, migration and differentiation of endothelial cells. Promotes reorganization of the actin cytoskeleton. Binding of vascular growth factors leads to the activation of several signaling cascades. Activation of PLCG1 leads to the production of the cellular signaling molecules diacylglycerol and inositol 1,4,5-trisphosphate and the activation of protein kinase C. Mediates activation of MAPK1/ERK2, MAPK3/ERK1 and the MAP kinase signaling pathway, as well as of the AKT1 signaling pathway. Mediates phosphorylation of PIK3R1, the regulatory subunit of phosphatidylinositol 3-kinase, reorganization of the actin cytoskeleton and activation of PTK2/FAK1. Required for VEGFA-mediated induction of NOS2 and NOS3, leading to the production of the signaling molecule nitric oxide (NO) by endothelial cells. In Coturnix japonica (Japanese quail), this protein is Vascular endothelial growth factor receptor 2.